A 236-amino-acid chain; its full sequence is MDNKKFLDFLKQNRIEPKNLSIYLEALTHKSYANEHKLTKNYQRLEFLGDACVEWVISNFIFNYKIKDNEKMRSLDEGEMTRARSNMVRSEILSYAAKDLGLTDFLMIGVGLEQDQSARMEKIYEDIFEAFIGAVAQDQGIKKVSLILEKTLIKYFREGQINYQKDYKTIFQEQAQRINKKPIMYKLVRNEGDKKEVHLVWNDLIYGIGIASTRKEAEILAAKNAILKLDDYTKKA.

Residues 6-140 form the RNase III domain; it reads FLDFLKQNRI…FIGAVAQDQG (135 aa). Glu46 contacts Mg(2+). The active site involves Asp50. Positions 126 and 129 each coordinate Mg(2+). The active site involves Glu129. In terms of domain architecture, DRBM spans 166-231; that stretch reads DYKTIFQEQA…AKNAILKLDD (66 aa).

Belongs to the ribonuclease III family. In terms of assembly, homodimer. Mg(2+) is required as a cofactor.

It localises to the cytoplasm. The catalysed reaction is Endonucleolytic cleavage to 5'-phosphomonoester.. Digests double-stranded RNA. Involved in the processing of primary rRNA transcript to yield the immediate precursors to the large and small rRNAs (23S and 16S). Processes some mRNAs, and tRNAs when they are encoded in the rRNA operon. Processes pre-crRNA and tracrRNA of type II CRISPR loci if present in the organism. The sequence is that of Ribonuclease 3 from Ureaplasma parvum serovar 3 (strain ATCC 700970).